Consider the following 237-residue polypeptide: NAD(P)H-quinone oxidoreductase subunit K, chloroplastic (237 aa).

[4Fe-4S] cluster contacts are provided by Cys-55, Cys-56, Cys-120, and Cys-151.

The protein belongs to the complex I 20 kDa subunit family. NDH is composed of at least 16 different subunits, 5 of which are encoded in the nucleus. It depends on [4Fe-4S] cluster as a cofactor.

Its subcellular location is the plastid. It localises to the chloroplast thylakoid membrane. It catalyses the reaction a plastoquinone + NADH + (n+1) H(+)(in) = a plastoquinol + NAD(+) + n H(+)(out). The catalysed reaction is a plastoquinone + NADPH + (n+1) H(+)(in) = a plastoquinol + NADP(+) + n H(+)(out). Its function is as follows. NDH shuttles electrons from NAD(P)H:plastoquinone, via FMN and iron-sulfur (Fe-S) centers, to quinones in the photosynthetic chain and possibly in a chloroplast respiratory chain. The immediate electron acceptor for the enzyme in this species is believed to be plastoquinone. Couples the redox reaction to proton translocation, and thus conserves the redox energy in a proton gradient. This Nephroselmis olivacea (Green alga) protein is NAD(P)H-quinone oxidoreductase subunit K, chloroplastic.